We begin with the raw amino-acid sequence, 537 residues long: ATP-dependent 6-phosphofructokinase 5, chloroplastic (537 aa).

The N-terminal 52 residues, 1 to 52 (MDALSQAISSGISVPYKNNSSSLVPSHGLTSLILRKSRSPVNPSSRSRVSVR), are a transit peptide targeting the chloroplast. The tract at residues 35–64 (RKSRSPVNPSSRSRVSVRASEIQHSKTSAS) is disordered. Low complexity predominate over residues 39–54 (SPVNPSSRSRVSVRAS). Position 147 is a phosphoserine (Ser-147). Residues Gly-189, 253-254 (RG), and 278-281 (GNGT) contribute to the ATP site. Residue Asn-279 participates in Mg(2+) binding. Residues 307–309 (TID), 352–354 (MGR), Glu-408, and 460–463 (YMIR) each bind substrate. Asp-309 (proton acceptor) is an active-site residue.

The protein belongs to the phosphofructokinase type A (PFKA) family. PPi-dependent PFK group II subfamily. Atypical ATP-dependent clade 'X' sub-subfamily. In terms of assembly, homotetramer. Requires Mg(2+) as cofactor. As to expression, expressed in roots, leaves, stems and flowers.

Its subcellular location is the plastid. It is found in the chloroplast. The catalysed reaction is beta-D-fructose 6-phosphate + ATP = beta-D-fructose 1,6-bisphosphate + ADP + H(+). It functions in the pathway carbohydrate degradation; glycolysis; D-glyceraldehyde 3-phosphate and glycerone phosphate from D-glucose: step 3/4. With respect to regulation, allosterically activated by AMP. Its function is as follows. Catalyzes the phosphorylation of D-fructose 6-phosphate to fructose 1,6-bisphosphate by ATP, the first committing step of glycolysis. In Arabidopsis thaliana (Mouse-ear cress), this protein is ATP-dependent 6-phosphofructokinase 5, chloroplastic.